The chain runs to 410 residues: Peptidase T (410 aa).

H79 contacts Zn(2+). D81 is an active-site residue. Zn(2+) is bound at residue D142. The active-site Proton acceptor is the E176. Positions 177, 199, and 381 each coordinate Zn(2+).

The protein belongs to the peptidase M20B family. Zn(2+) is required as a cofactor.

It localises to the cytoplasm. It carries out the reaction Release of the N-terminal residue from a tripeptide.. In terms of biological role, cleaves the N-terminal amino acid of tripeptides. The protein is Peptidase T of Bacillus mycoides (strain KBAB4) (Bacillus weihenstephanensis).